We begin with the raw amino-acid sequence, 98 residues long: Small ribosomal subunit protein bS6 (98 aa).

This sequence belongs to the bacterial ribosomal protein bS6 family.

Its function is as follows. Binds together with bS18 to 16S ribosomal RNA. The sequence is that of Small ribosomal subunit protein bS6 from Limosilactobacillus reuteri (strain DSM 20016) (Lactobacillus reuteri).